Here is a 357-residue protein sequence, read N- to C-terminus: Guanine nucleotide-binding protein alpha-1 subunit (357 aa).

Gly-2 carries N-myristoyl glycine lipidation. Cys-4 carries the S-palmitoyl cysteine lipid modification. The region spanning Asn-32–Phe-357 is the G-alpha domain. Residues Lys-35 to Thr-48 form a G1 motif region. Positions 43, 44, 45, 46, 47, 48, 151, 176, 182, 204, 270, 271, 273, and 329 each coordinate GTP. Ser-47 lines the Mg(2+) pocket. Residues Asp-174 to Thr-182 are G2 motif. Thr-182 provides a ligand contact to Mg(2+). The G3 motif stretch occupies residues Phe-197–Arg-206. Positions Ile-266–Asp-273 are G4 motif. Residues Thr-327–Thr-332 form a G5 motif region.

This sequence belongs to the G-alpha family. G(q) subfamily. In terms of assembly, g proteins are composed of 3 units; alpha, beta and gamma. The alpha chain contains the guanine nucleotide binding site. It depends on Mg(2+) as a cofactor.

Functionally, guanine nucleotide-binding proteins (G proteins) are involved as modulators or transducers in various transmembrane signaling systems. The sequence is that of Guanine nucleotide-binding protein alpha-1 subunit (gpa-1) from Caenorhabditis briggsae.